Reading from the N-terminus, the 384-residue chain is Spermidine/putrescine import ATP-binding protein PotA (384 aa).

The 233-residue stretch at 6 to 238 (IAFKNVSKVF…PINHFVATFI (233 aa)) folds into the ABC transporter domain. Position 40 to 47 (40 to 47 (GASGSGKS)) interacts with ATP.

The protein belongs to the ABC transporter superfamily. Spermidine/putrescine importer (TC 3.A.1.11.1) family. In terms of assembly, the complex is composed of two ATP-binding proteins (PotA), two transmembrane proteins (PotB and PotC) and a solute-binding protein (PotD).

The protein localises to the cell membrane. The catalysed reaction is ATP + H2O + polyamine-[polyamine-binding protein]Side 1 = ADP + phosphate + polyamineSide 2 + [polyamine-binding protein]Side 1.. Part of the ABC transporter complex PotABCD involved in spermidine/putrescine import. Responsible for energy coupling to the transport system. The sequence is that of Spermidine/putrescine import ATP-binding protein PotA from Streptococcus agalactiae serotype Ia (strain ATCC 27591 / A909 / CDC SS700).